Here is a 335-residue protein sequence, read N- to C-terminus: DNA-directed RNA polymerase subunit alpha (335 aa).

An alpha N-terminal domain (alpha-NTD) region spans residues 1 to 231 (MVREKITVST…DLLIPFLHTK (231 aa)). Residues 263-335 (KKMALKSIFI…FVIDLPKNKF (73 aa)) form an alpha C-terminal domain (alpha-CTD) region.

This sequence belongs to the RNA polymerase alpha chain family. In plastids the minimal PEP RNA polymerase catalytic core is composed of four subunits: alpha, beta, beta', and beta''. When a (nuclear-encoded) sigma factor is associated with the core the holoenzyme is formed, which can initiate transcription.

The protein resides in the plastid. The protein localises to the chloroplast. It catalyses the reaction RNA(n) + a ribonucleoside 5'-triphosphate = RNA(n+1) + diphosphate. In terms of biological role, DNA-dependent RNA polymerase catalyzes the transcription of DNA into RNA using the four ribonucleoside triphosphates as substrates. The protein is DNA-directed RNA polymerase subunit alpha of Lactuca sativa (Garden lettuce).